Consider the following 334-residue polypeptide: Phosphate acyltransferase (334 aa).

The protein belongs to the PlsX family. As to quaternary structure, homodimer. Probably interacts with PlsY.

It localises to the cytoplasm. It carries out the reaction a fatty acyl-[ACP] + phosphate = an acyl phosphate + holo-[ACP]. It participates in lipid metabolism; phospholipid metabolism. In terms of biological role, catalyzes the reversible formation of acyl-phosphate (acyl-PO(4)) from acyl-[acyl-carrier-protein] (acyl-ACP). This enzyme utilizes acyl-ACP as fatty acyl donor, but not acyl-CoA. This is Phosphate acyltransferase from Streptococcus thermophilus (strain CNRZ 1066).